The following is a 182-amino-acid chain: Large ribosomal subunit protein uL10 (182 aa).

It belongs to the universal ribosomal protein uL10 family. As to quaternary structure, part of the ribosomal stalk of the 50S ribosomal subunit. The N-terminus interacts with L11 and the large rRNA to form the base of the stalk. The C-terminus forms an elongated spine to which L12 dimers bind in a sequential fashion forming a multimeric L10(L12)X complex.

In terms of biological role, forms part of the ribosomal stalk, playing a central role in the interaction of the ribosome with GTP-bound translation factors. This chain is Large ribosomal subunit protein uL10, found in Herminiimonas arsenicoxydans.